Reading from the N-terminus, the 157-residue chain is MYSIEVRTHSALHVVKGAVVKVLGSEAKWTYSTYVKGNKGVLIVKFDRKPSDEEIREIERLANEKVKENAPIKIYELPREEAEKMFGEDMYDLFPVPEDVRILKVVVIEDWNVNACNKEHTKTTGEIGPIKIRKVRFRKSKGLLEIHFELLELENPS.

Zn(2+) contacts are provided by His-9, His-13, Cys-116, and His-120.

The protein belongs to the class-II aminoacyl-tRNA synthetase family. Editing domain AlaX-S subfamily. As to quaternary structure, monomer and homodimer; the dimer is less active in tRNA editing and does not have a zinc ion associated with it. Another report shows only a monomeric form. Zn(2+) serves as cofactor.

It localises to the cytoplasm. In terms of biological role, functions in trans to edit the amino acid moiety from mischarged charged Ser-tRNA(Ala). Has little activity against Gly-tRNA(Ala). The chain is Alanyl-tRNA editing protein AlaX-S (alaXS) from Pyrococcus horikoshii (strain ATCC 700860 / DSM 12428 / JCM 9974 / NBRC 100139 / OT-3).